Here is a 981-residue protein sequence, read N- to C-terminus: Protein deadlock (981 aa).

Residues M1 to L60 are required for interaction with rhi/rhino. 6 disordered regions span residues L72–P195, I274–L307, S327–E352, L375–I446, G554–K586, and L642–R662. Composition is skewed to polar residues over residues P104 to T113 and N150 to Q160. Basic and acidic residues predominate over residues K167 to R191. The segment covering E337–E352 has biased composition (basic and acidic residues). The span at K377 to V390 shows a compositional bias: basic residues. Basic and acidic residues predominate over residues T409 to I419. A compositionally biased stretch (polar residues) spans Q422–I446. A compositionally biased stretch (basic and acidic residues) spans R652–R662.

As to quaternary structure, component of the Rhino-Deadlock-Cutoff (RDC) complex, composed of rhi/rhino, del/deadlock and cuff/cutoff. Interacts (via N-terminus) with rhi/rhino (via C-terminus); this interaction is direct. Interacts (via C-terminus) with cuff/cutoff; this interaction is direct.

The protein localises to the nucleus. Its subcellular location is the cytoplasm. It is found in the cytoskeleton. The protein resides in the microtubule organizing center. It localises to the centrosome. The protein localises to the chromosome. Its function is as follows. Developmental protein involved in oogenesis. Required for germline maintenance, stability of mitotic spindles, localization of patterning determinants, oocyte growth and fusome biogenesis in males and females. Also required for dorso-ventral and antero-posterior patterning of oocyte and eggshell. May be involved in microtubule function during oogenesis. Part of a rhi-dependent transcription machinery that enables the generation of piRNA precursors from heterochromatin while maintaining the suppression of transposon-encoded promoters and enhancers. Component of the RDC complex (rhi, del and cuff) which binds to repressive H3K9me3 marks in the piRNA clusters. RDC promotes the bidirectional transcription of piRNA clusters at these sites by interacting with Moonshiner which forms a complex with the transcription initiation factors TfIIA-S and Trf2. This mechanism allows transcription to occur in piRNA clusters despite the lack of proper promoter elements and in the presence of the repressive H3K9me3 mark. As part of the RDC complex, involved in suppression of splicing. The protein is Protein deadlock (del) of Drosophila melanogaster (Fruit fly).